A 2219-amino-acid chain; its full sequence is E3 ubiquitin-protein ligase Ubr3 (2219 aa).

Disordered stretches follow at residues 1–48 (MDED…DLSS) and 78–134 (AAGA…SALS). The segment covering 20 to 29 (VREQTHHPPM) has biased composition (basic and acidic residues). The span at 31 to 42 (EDQELDNEDGSS) shows a compositional bias: acidic residues. Residues 114–134 (GPTTTTSSGTAAESGAASALS) show a composition bias toward low complexity. The UBR-type zinc-finger motif lies at 222 to 293 (AKCGLVWVPH…AEGFCSDHGI (72 aa)). 2 disordered regions span residues 1348 to 1367 (SFSL…TMDV) and 1440 to 1464 (QREK…KARE). Acidic residues predominate over residues 1353–1367 (DGEDQSSDDDSTMDV). The RING-type; degenerate zinc finger occupies 1607-1643 (CGHHVHLSCLEAYLKTLYTTQRQPVQDRGEFYCPVCR). Disordered stretches follow at residues 1872–1902 (VGSD…QQQQ) and 1935–1954 (SAAA…HGAS). Low complexity predominate over residues 1877–1888 (SAAESQQQESAA).

Belongs to the E3 ubiquitin-protein ligase UBR1-like family. In terms of assembly, selectively interacts (via UBR-type zinc finger) with the cleaved form of Diap1; this interaction is enhanced by tal. Interacts with tal and Rrp1. Interacts with ovo isoform B (via N-terminus). Interacts with Cad99C (via the cytoplasmic domain). Interacts with ck and Sans. Interacts with cos (via Kinesin motor domain). In terms of processing, in vitro, self-ubiquitination in the presence of E1, E2 and ubiquitin.

The protein localises to the cytoplasm. It is found in the nucleus. It carries out the reaction S-ubiquitinyl-[E2 ubiquitin-conjugating enzyme]-L-cysteine + [acceptor protein]-L-lysine = [E2 ubiquitin-conjugating enzyme]-L-cysteine + N(6)-ubiquitinyl-[acceptor protein]-L-lysine.. It functions in the pathway protein modification; protein ubiquitination. Its function is as follows. E3 ubiquitin-protein ligase which is a component of the N-end rule pathway. Recognizes and binds to proteins bearing specific N-terminal residues, leading to their ubiquitination and subsequent degradation. Binds to the E3 ubiquitin-protein ligase Diap1 and enhances its ubiquitination and anti-apoptotic functions. Essential during trichome development for the ubiquitination of the N-terminus of ovo isoform B (svb), converting it from a transcriptional inhibitor to an activator. Positively regulates a hh-signaling pathway which functions in photoreceptor differentiation. Activation of hh up-regulates transcription of Ubr3, which in turn promotes hh signaling by mediating the ubiquitination and degradation of cos. Necessary for auditory transduction: plays a role in Johnston's organ organization by acting in the regulation of zip and ck function in scolopidial apical attachment. Likely to function by acting in a pathway that negatively regulates the ubiquitination of zip, consequently affecting its interaction with ck. May also negatively regulate a component of the SCF (SKP1-CUL1-F-box protein) E3 ubiquitin-protein ligase complex Cul1, which also appears to function in the negative regulation of the zip-ck interaction and scolopidial apical attachment. The sequence is that of E3 ubiquitin-protein ligase Ubr3 from Drosophila melanogaster (Fruit fly).